The following is a 158-amino-acid chain: Large ribosomal subunit protein uL30 (158 aa).

This sequence belongs to the universal ribosomal protein uL30 family. As to quaternary structure, part of the 50S ribosomal subunit.

This Saccharolobus islandicus (strain Y.N.15.51 / Yellowstone #2) (Sulfolobus islandicus) protein is Large ribosomal subunit protein uL30.